A 279-amino-acid polypeptide reads, in one-letter code: Ribosomal RNA small subunit methyltransferase A (279 aa).

Residues His10, Leu12, Gly37, Glu58, Asp83, and Asn108 each coordinate S-adenosyl-L-methionine.

It belongs to the class I-like SAM-binding methyltransferase superfamily. rRNA adenine N(6)-methyltransferase family. RsmA subfamily.

Its subcellular location is the cytoplasm. It catalyses the reaction adenosine(1518)/adenosine(1519) in 16S rRNA + 4 S-adenosyl-L-methionine = N(6)-dimethyladenosine(1518)/N(6)-dimethyladenosine(1519) in 16S rRNA + 4 S-adenosyl-L-homocysteine + 4 H(+). Functionally, specifically dimethylates two adjacent adenosines (A1518 and A1519) in the loop of a conserved hairpin near the 3'-end of 16S rRNA in the 30S particle. May play a critical role in biogenesis of 30S subunits. The polypeptide is Ribosomal RNA small subunit methyltransferase A (Synechococcus elongatus (strain ATCC 33912 / PCC 7942 / FACHB-805) (Anacystis nidulans R2)).